An 832-amino-acid chain; its full sequence is Receptor-interacting serine/threonine-protein kinase 4 (832 aa).

Residues 22–286 form the Protein kinase domain; it reads FTGWEKVGSG…QGNGLNGELI (265 aa). ATP contacts are provided by residues 28 to 36 and Lys-51; that span reads VGSGGFGQV. A Glycyl lysine isopeptide (Lys-Gly) (interchain with G-Cter in ubiquitin) cross-link involves residue Lys-51. Asp-143 functions as the Proton acceptor in the catalytic mechanism. Lys-145 participates in a covalent cross-link: Glycyl lysine isopeptide (Lys-Gly) (interchain with G-Cter in ubiquitin). Disordered stretches follow at residues 325–368 and 389–424; these read QEIT…RLKR and SGVS…GVSS. The segment covering 329 to 342 has biased composition (acidic residues); that stretch reads SETEDLCEKPDDEV. Positions 343 to 359 are enriched in basic and acidic residues; it reads KETAHDLDVKSPPEPRS. Positions 403–424 are enriched in low complexity; that stretch reads RSSSESKLPSSGSGKRLSGVSS. ANK repeat units lie at residues 485–514, 518–547, 551–580, 584–613, 617–647, 651–680, 684–713, 717–746, 750–780, and 782–811; these read SGAS…NPNL, RGST…SVNA, DQWT…SVNE, EGRT…DVSL, DAWL…SVNA, DGRT…DVNV, LAQT…GKEA, DGYT…DVLA, LNQT…DLFD, and QGLS…HINL.

This sequence belongs to the protein kinase superfamily. TKL Ser/Thr protein kinase family. In terms of assembly, interacts with PRKCB. Interacts with TRAF1, TRAF2, TRAF3 and TRAF5. Interacts with BIRC2/c-IAP1, BIRC3/c-IAP2 and XIAP/BIRC4. In terms of processing, may be phosphorylated by MAP3K2 and MAP3K3. Proteolytically cleaved by during Fas-induced apoptosis. Cleavage at Asp-388 and Asp-426. Post-translationally, polyubiquitinated with 'Lys-48' and 'Lys-63'-linked chains by BIRC2/c-IAP1 and BIRC3/c-IAP2, leading to activation of NF-kappa-B. Expressed in hair follicles and skin.

The protein localises to the cytoplasm. Its subcellular location is the membrane. It catalyses the reaction L-seryl-[protein] + ATP = O-phospho-L-seryl-[protein] + ADP + H(+). The catalysed reaction is L-threonyl-[protein] + ATP = O-phospho-L-threonyl-[protein] + ADP + H(+). Serine/threonine protein kinase. Required for embryonic skin development and correct skin homeostasis in adults, via phosphorylation of PKP1 and subsequent promotion of keratinocyte differentiation and cell adhesion. It is a direct transcriptional target of TP63. Plays a role in NF-kappa-B activation. This chain is Receptor-interacting serine/threonine-protein kinase 4 (RIPK4), found in Homo sapiens (Human).